Reading from the N-terminus, the 192-residue chain is Pyridoxal 5'-phosphate synthase subunit PdxT (192 aa).

Residue 53-55 (GES) coordinates L-glutamine. Catalysis depends on Cys82, which acts as the Nucleophile. L-glutamine is bound by residues Arg109 and 137 to 138 (IR). Catalysis depends on charge relay system residues His173 and Glu175.

This sequence belongs to the glutaminase PdxT/SNO family. In the presence of PdxS, forms a dodecamer of heterodimers. Only shows activity in the heterodimer.

It catalyses the reaction aldehydo-D-ribose 5-phosphate + D-glyceraldehyde 3-phosphate + L-glutamine = pyridoxal 5'-phosphate + L-glutamate + phosphate + 3 H2O + H(+). It carries out the reaction L-glutamine + H2O = L-glutamate + NH4(+). It functions in the pathway cofactor biosynthesis; pyridoxal 5'-phosphate biosynthesis. In terms of biological role, catalyzes the hydrolysis of glutamine to glutamate and ammonia as part of the biosynthesis of pyridoxal 5'-phosphate. The resulting ammonia molecule is channeled to the active site of PdxS. This Methanoculleus marisnigri (strain ATCC 35101 / DSM 1498 / JR1) protein is Pyridoxal 5'-phosphate synthase subunit PdxT.